Here is a 938-residue protein sequence, read N- to C-terminus: RIPOR family member 3 (938 aa).

Phosphoserine is present on residues Ser9, Ser24, and Ser340. Residue Thr345 is modified to Phosphothreonine. Phosphoserine occurs at positions 351 and 384. Disordered stretches follow at residues 402–430 (EMDS…FLPV) and 579–603 (FGGS…SPSE).

Belongs to the RIPOR family.

This chain is RIPOR family member 3, found in Mus musculus (Mouse).